The following is a 532-amino-acid chain: MTHGRVNPDFRLEDQGITGLGTVYYNLIEPDLIQYALARGEGSLGKGGSFLVTTGKFTGRSPKDKHVVKTDSVADTIWWENNREMSPEGFDQLYTDMLAHMEGRDYFVEDLTGGSDPKHAINVRMVTELAWHGLFIRHMLRRPDREDLDDFIADFTVINCPSFQADPAKHNCRSETVIAMNFDKKLILIGGTEYAGENKKSVFTLLNYLLPEKGVMPMHCSANHAVGNPVDTAVFFGLSGTGKTTLSADPARTLIGDDEHGWSDTGTFNFEGGCYAKTISLNPEAEPEIYATTEKFGTVIENMVYDAETKDLDFEDDSLTANMRCAYPLHYISNASQAARGGHPKNIIMLTCDAFGVLPPISRLTPAQAMYHFLSGFTSKVAGTERGVTEPEPTFSTCFGAPFMPRRPEVYGNLLREKIATHGATCWLVNTGWTGGAYGTGSRMPIKATRGLLTAALDGSLADAEFRKDPNFGFQVPVDVTGVPGILLDPRRTWDDAEAYDRQAAKLVKMFSDNFEQYLPFIDEDVRAAAIS.

3 residues coordinate substrate: R60, Y194, and K200. ATP-binding positions include K200, H219, and 237–245 (GLSGTGKTT). Residues K200 and H219 each coordinate Mn(2+). D258 is a Mn(2+) binding site. 3 residues coordinate ATP: E286, R324, and T449. R324 provides a ligand contact to substrate.

This sequence belongs to the phosphoenolpyruvate carboxykinase (ATP) family. Mn(2+) serves as cofactor.

The protein resides in the cytoplasm. The enzyme catalyses oxaloacetate + ATP = phosphoenolpyruvate + ADP + CO2. The protein operates within carbohydrate biosynthesis; gluconeogenesis. Involved in the gluconeogenesis. Catalyzes the conversion of oxaloacetate (OAA) to phosphoenolpyruvate (PEP) through direct phosphoryl transfer between the nucleoside triphosphate and OAA. The chain is Phosphoenolpyruvate carboxykinase (ATP) from Roseobacter denitrificans (strain ATCC 33942 / OCh 114) (Erythrobacter sp. (strain OCh 114)).